Consider the following 129-residue polypeptide: Small ribosomal subunit protein uS11 (129 aa).

The protein belongs to the universal ribosomal protein uS11 family. In terms of assembly, part of the 30S ribosomal subunit. Interacts with proteins S7 and S18. Binds to IF-3.

Functionally, located on the platform of the 30S subunit, it bridges several disparate RNA helices of the 16S rRNA. Forms part of the Shine-Dalgarno cleft in the 70S ribosome. This Erythrobacter litoralis (strain HTCC2594) protein is Small ribosomal subunit protein uS11.